Reading from the N-terminus, the 498-residue chain is Acetyl-coenzyme A carboxylase carboxyl transferase subunit beta, chloroplastic (498 aa).

The CoA carboxyltransferase N-terminal domain occupies 228–498; sequence LWVQCEICYG…LNHNLSRTLT (271 aa). 4 residues coordinate Zn(2+): C232, C235, C251, and C254. A C4-type zinc finger spans residues 232 to 254; it reads CEICYGLNYKKFFKSKMNICEQC.

This sequence belongs to the AccD/PCCB family. As to quaternary structure, acetyl-CoA carboxylase is a heterohexamer composed of biotin carboxyl carrier protein, biotin carboxylase and 2 subunits each of ACCase subunit alpha and ACCase plastid-coded subunit beta (accD). Zn(2+) is required as a cofactor.

The protein localises to the plastid. Its subcellular location is the chloroplast stroma. It carries out the reaction N(6)-carboxybiotinyl-L-lysyl-[protein] + acetyl-CoA = N(6)-biotinyl-L-lysyl-[protein] + malonyl-CoA. Its pathway is lipid metabolism; malonyl-CoA biosynthesis; malonyl-CoA from acetyl-CoA: step 1/1. Functionally, component of the acetyl coenzyme A carboxylase (ACC) complex. Biotin carboxylase (BC) catalyzes the carboxylation of biotin on its carrier protein (BCCP) and then the CO(2) group is transferred by the transcarboxylase to acetyl-CoA to form malonyl-CoA. This Populus alba (White poplar) protein is Acetyl-coenzyme A carboxylase carboxyl transferase subunit beta, chloroplastic.